The primary structure comprises 525 residues: Peptide chain release factor 3 (525 aa).

The region spanning 9–276 is the tr-type G domain; that stretch reads AKRRTFAIIS…GFTRYAPAPQ (268 aa). GTP is bound by residues 18 to 25, 86 to 90, and 140 to 143; these read SHPDAGKT, DTPGH, and NKFD.

Belongs to the TRAFAC class translation factor GTPase superfamily. Classic translation factor GTPase family. PrfC subfamily.

The protein resides in the cytoplasm. Increases the formation of ribosomal termination complexes and stimulates activities of RF-1 and RF-2. It binds guanine nucleotides and has strong preference for UGA stop codons. It may interact directly with the ribosome. The stimulation of RF-1 and RF-2 is significantly reduced by GTP and GDP, but not by GMP. The protein is Peptide chain release factor 3 of Francisella tularensis subsp. tularensis (strain FSC 198).